The primary structure comprises 217 residues: Glutathione S-transferase B (217 aa).

The 87-residue stretch at 1–87 (PMTLGYWNIR…YIARKHNLCG (87 aa)) folds into the GST N-terminal domain. Residues 6-7 (YW), 45-49 (WLNEK), 58-59 (NL), and 71-72 (QS) each bind glutathione. Residues 89–207 (TEEETIRMDI…KSSRFLPKPL (119 aa)) enclose the GST C-terminal domain. Residue Tyr-115 participates in substrate binding.

The protein belongs to the GST superfamily. Mu family. In terms of assembly, homodimer.

The protein resides in the cytoplasm. It carries out the reaction RX + glutathione = an S-substituted glutathione + a halide anion + H(+). The catalysed reaction is prostaglandin A2 + glutathione = prostaglandin A2-S-(R)-glutathione. It catalyses the reaction prostaglandin J2 + glutathione = prostaglandin J2-S-(R)-glutathione. The enzyme catalyses prostaglandin J2 + glutathione = prostaglandin J2-S-(S)-glutathione. It carries out the reaction prostaglandin A2 + glutathione = prostaglandin A2-S-(S)-glutathione. The catalysed reaction is 11(S)-hydroxy-14(S),15(S)-epoxy-(5Z,8Z,12E)-eicosatrienoate + glutathione = (11S,15S)-dihydroxy-14(R)-S-glutathionyl-(5Z,8Z,12E)-eicosatrienoate. Its function is as follows. Conjugation of reduced glutathione to a wide number of exogenous and endogenous hydrophobic electrophiles. Involved in the formation of glutathione conjugates of both prostaglandin A2 (PGA2) and prostaglandin J2 (PGJ2). Participates in the formation of novel hepoxilin regioisomers. The chain is Glutathione S-transferase B (GSTM1) from Cavia porcellus (Guinea pig).